The chain runs to 631 residues: Glutamine--fructose-6-phosphate aminotransferase [isomerizing] (631 aa).

Residue cysteine 2 is the Nucleophile; for GATase activity of the active site. Residues 2 to 225 (CGIVGYIGTQ…NGEIARLTPL (224 aa)) form the Glutamine amidotransferase type-2 domain. 2 SIS domains span residues 298–446 (LDPQ…QRHS) and 480–621 (LAHE…VDQP). Lysine 626 functions as the For Fru-6P isomerization activity in the catalytic mechanism.

In terms of assembly, homodimer.

Its subcellular location is the cytoplasm. The enzyme catalyses D-fructose 6-phosphate + L-glutamine = D-glucosamine 6-phosphate + L-glutamate. In terms of biological role, catalyzes the first step in hexosamine metabolism, converting fructose-6P into glucosamine-6P using glutamine as a nitrogen source. The sequence is that of Glutamine--fructose-6-phosphate aminotransferase [isomerizing] from Synechocystis sp. (strain ATCC 27184 / PCC 6803 / Kazusa).